The sequence spans 153 residues: Ribonuclease H (153 aa).

The RNase H type-1 domain maps to 4 to 146; it reads NNEIVEIYTD…CDRLATEQIK (143 aa). Mg(2+)-binding residues include Asp13, Glu51, Asp73, and Asp138.

This sequence belongs to the RNase H family. In terms of assembly, monomer. The cofactor is Mg(2+).

It is found in the cytoplasm. The enzyme catalyses Endonucleolytic cleavage to 5'-phosphomonoester.. Its function is as follows. Endonuclease that specifically degrades the RNA of RNA-DNA hybrids. The protein is Ribonuclease H of Caldanaerobacter subterraneus subsp. tengcongensis (strain DSM 15242 / JCM 11007 / NBRC 100824 / MB4) (Thermoanaerobacter tengcongensis).